Here is a 348-residue protein sequence, read N- to C-terminus: Dihydroorotase (348 aa).

Residues His17 and His19 each contribute to the Zn(2+) site. Substrate contacts are provided by residues 19–21 (HLR) and Asn45. Zn(2+) is bound by residues Lys103, His140, and His178. N6-carboxylysine is present on Lys103. Residue His140 participates in substrate binding. Leu223 lines the substrate pocket. Zn(2+) is bound at residue Asp251. Asp251 is a catalytic residue. Residues His255 and Ala267 each coordinate substrate.

The protein belongs to the metallo-dependent hydrolases superfamily. DHOase family. Class II DHOase subfamily. Homodimer. Zn(2+) is required as a cofactor.

It carries out the reaction (S)-dihydroorotate + H2O = N-carbamoyl-L-aspartate + H(+). Its pathway is pyrimidine metabolism; UMP biosynthesis via de novo pathway; (S)-dihydroorotate from bicarbonate: step 3/3. Functionally, catalyzes the reversible cyclization of carbamoyl aspartate to dihydroorotate. This Salmonella arizonae (strain ATCC BAA-731 / CDC346-86 / RSK2980) protein is Dihydroorotase.